The following is a 367-amino-acid chain: Dihydroorotate dehydrogenase (quinone) (367 aa).

FMN contacts are provided by residues 67 to 71 (AGFDK) and Thr91. A substrate-binding site is contributed by Lys71. A substrate-binding site is contributed by 116 to 120 (NRLGF). Asn145 and Asn178 together coordinate FMN. Asn178 lines the substrate pocket. The active-site Nucleophile is Ser181. Position 183 (Asn183) interacts with substrate. FMN-binding residues include Lys219 and Thr247. Residue 248–249 (NT) participates in substrate binding. FMN-binding positions include Gly269, Gly298, and 319–320 (YT).

It belongs to the dihydroorotate dehydrogenase family. Type 2 subfamily. Monomer. The cofactor is FMN.

The protein resides in the cell membrane. The catalysed reaction is (S)-dihydroorotate + a quinone = orotate + a quinol. It participates in pyrimidine metabolism; UMP biosynthesis via de novo pathway; orotate from (S)-dihydroorotate (quinone route): step 1/1. Functionally, catalyzes the conversion of dihydroorotate to orotate with quinone as electron acceptor. The sequence is that of Dihydroorotate dehydrogenase (quinone) from Roseiflexus castenholzii (strain DSM 13941 / HLO8).